Here is a 190-residue protein sequence, read N- to C-terminus: Threonylcarbamoyl-AMP synthase (190 aa).

Positions 7–190 (RAALSDVLQA…ALTGKQFRQG (184 aa)) constitute a YrdC-like domain.

This sequence belongs to the SUA5 family. TsaC subfamily.

The protein localises to the cytoplasm. It carries out the reaction L-threonine + hydrogencarbonate + ATP = L-threonylcarbamoyladenylate + diphosphate + H2O. Its function is as follows. Required for the formation of a threonylcarbamoyl group on adenosine at position 37 (t(6)A37) in tRNAs that read codons beginning with adenine. Catalyzes the conversion of L-threonine, HCO(3)(-)/CO(2) and ATP to give threonylcarbamoyl-AMP (TC-AMP) as the acyladenylate intermediate, with the release of diphosphate. This Yersinia enterocolitica serotype O:8 / biotype 1B (strain NCTC 13174 / 8081) protein is Threonylcarbamoyl-AMP synthase.